Here is a 206-residue protein sequence, read N- to C-terminus: Putative apoptosis inhibitor 021L (206 aa).

Residues threonine 95 to serine 105 show a composition bias toward polar residues. The interval threonine 95–aspartate 114 is disordered. An RING-type zinc finger spans residues cysteine 157–arginine 195.

Belongs to the IIV-6 193R family.

Plays a role early in infection by preventing host cell apoptosis. This chain is Putative apoptosis inhibitor 021L, found in Aedes vexans (Inland floodwater mosquito).